An 852-amino-acid chain; its full sequence is Sarcoplasmic reticulum histidine-rich calcium-binding protein (852 aa).

Positions 1–27 (MGCRGPWLHTCLLWAAVASLLLPPAVT) are cleaved as a signal peptide. A Pyrrolidone carboxylic acid modification is found at Q28. Positions 44–58 (AGAPGPSGEAAAAGL) are enriched in low complexity. The interval 44–770 (AGAPGPSGEA…EDTGPEDTQE (727 aa)) is disordered. Repeat copies occupy residues 59-79 (GHHG…SMEN) and 80-100 (GHHF…SREY). A 2 X approximate tandem repeats region spans residues 59–100 (GHHGHSHRSPGEENEDVSMENGHHFWSHRDHGETDDEVSREY). A compositionally biased stretch (basic and acidic residues) spans 79–101 (NGHHFWSHRDHGETDDEVSREYG). At S120 the chain carries Phosphoserine. Over residues 146-157 (LAEHGSHGHGHE) the composition is skewed to basic and acidic residues. 12 stretches are compositionally biased toward acidic residues: residues 184 to 195 (EEGEEEEEEEEV), 208 to 217 (DEEDEDDDST), 233 to 246 (EEDE…GDST), 261 to 275 (EEED…GDST), 291 to 303 (EEDE…GDST), 319 to 332 (EEDD…GDST), 348 to 360 (EEDE…GDST), 376 to 388 (EEDE…GDST), 404 to 416 (EEDE…GDST), 432 to 444 (EEDE…GDST), 459 to 468 (EEEDEDDDDE), and 484 to 497 (EDDG…DDST). 10 tandem repeats follow at residues 199-224 (HRHR…RHQA), 225-253 (HRHR…HHQA), 254-282 (HRHR…RHQA), 283-310 (HRHR…RHQA), 311-339 (HRHR…RHQA), 340-367 (HRHR…RHQA), 368-395 (HRHR…RHQA), 396-423 (HRHR…HHQA), 424-451 (HRHR…RHQA), and 452-470 (HRHR…DEGE). The tract at residues 199 to 470 (HRHRGHGKED…EDEDDDDEGE (272 aa)) is 10 X tandem repeats, acidic. Positions 471-585 (HHHVPHRGHR…HHVASHPPPG (115 aa)) are 4 X approximate tandem repeats. The segment covering 509–536 (HGKEEAEVTSDEHHHHVPDHGHQGHGDK) has biased composition (basic and acidic residues). Phosphoserine occurs at positions 518, 544, and 614. Basic and acidic residues-rich tracts occupy residues 587–619 (RSRE…ERGH), 630–646 (PPED…KEEV), and 658–681 (DGSR…HHSL). Residues 722–733 (EEEEEEEEEEEE) are compositionally biased toward acidic residues. Residues 746-757 (SGREAAGGASSE) show a composition bias toward low complexity. Over residues 758–769 (ESAEDTGPEDTQ) the composition is skewed to acidic residues. The segment at 780 to 826 (CGYCTFCNRCTECEHCHCDEDSMGEHCDQCQHCQFCYLCPLVCETVC) is metal-binding.

It belongs to the HRC family. The N-terminus is blocked.

The protein localises to the sarcoplasmic reticulum lumen. May play a role in the regulation of calcium sequestration or release in the SR of skeletal and cardiac muscle. In Oryctolagus cuniculus (Rabbit), this protein is Sarcoplasmic reticulum histidine-rich calcium-binding protein (HRC).